A 471-amino-acid polypeptide reads, in one-letter code: Glutamate--tRNA ligase 1 (471 aa).

The 'HIGH' region signature appears at 10–20; it reads PSPTGYLHIGG. Cys99, Cys101, Cys126, and Asp128 together coordinate Zn(2+). The 'KMSKS' region signature appears at 238-242; the sequence is RLSKR. Residue Lys241 participates in ATP binding.

It belongs to the class-I aminoacyl-tRNA synthetase family. Glutamate--tRNA ligase type 1 subfamily. Monomer. Requires Zn(2+) as cofactor.

The protein localises to the cytoplasm. It catalyses the reaction tRNA(Glu) + L-glutamate + ATP = L-glutamyl-tRNA(Glu) + AMP + diphosphate. Catalyzes the attachment of glutamate to tRNA(Glu) in a two-step reaction: glutamate is first activated by ATP to form Glu-AMP and then transferred to the acceptor end of tRNA(Glu). The protein is Glutamate--tRNA ligase 1 of Alkalilimnicola ehrlichii (strain ATCC BAA-1101 / DSM 17681 / MLHE-1).